The sequence spans 617 residues: Hemagglutinin glycoprotein (617 aa).

Topologically, residues 1–37 (MSPQRDRINAFYKDNPHPKGSRIVINREHLMIDRPYV) are intravirion. Residues 1 to 154 (MSPQRDRINA…RIKLDYDQYC (154 aa)) are stalk. The chain crosses the membrane as a helical; Signal-anchor for type II membrane protein span at residues 38–58 (LLAVLFVMFLSLIGLLAIAGI). Residues 59–617 (RLHRAAIYTA…VTREDGTNRR (559 aa)) lie on the Virion surface side of the membrane. N-linked (GlcNAc...) asparagine; by host glycans are attached at residues Asn-168, Asn-187, Asn-200, Asn-215, and Asn-238. Cystine bridges form between Cys-188–Cys-606, Cys-287–Cys-300, Cys-381–Cys-494, Cys-386–Cys-394, and Cys-570–Cys-579. The segment at 458–543 (PMKNLALGVI…VEHAVVYYVY (86 aa)) is interaction with host NECTIN4 receptor.

Belongs to the paramyxoviruses hemagglutinin-neuraminidase family. Non-sialidase subfamily. As to quaternary structure, homodimer; disulfide-linked. Further forms homotetramer (dimer of dimers). Interacts (via C-terminus) with human NECTIN4 (via N-terminus); this interaction allows attachment to the respiratory epithelium and viral entry. Interacts (via C-terminus) with human SLAMF1/CD150 (via N-terminus); this interaction allows attachment and viral entry into the CD150-expressing immune cells. Interacts with human CD46 antigen; this interaction allows attachment and viral entry of vaccine and laboratory-adapted strains.

The protein resides in the virion membrane. It is found in the host cell membrane. In terms of biological role, attaches the virus to the human SLAMF1/CD150 receptor for entry into host dendritic cells, macrophages, activated memory T cells and naive or memory B cells, thereby explaining the long immunosuppression that follows infection. In the respiratory airways, binds to the NECTIN4 receptor for entry into the host cell. Binding of H protein to the receptor induces a conformational change that allows the F protein to trigger virion/cell membranes fusion. The vaccine and laboratory-adapted strains use host CD46 as an alternate receptor. The high degree of interaction between H and CD46 results in down-regulation of the latter from the surface of infected cells, rendering them more sensitive to c3b-mediated complement lysis. This chain is Hemagglutinin glycoprotein (H), found in Homo sapiens (Human).